The chain runs to 296 residues: 4-hydroxybenzoate octaprenyltransferase (296 aa).

8 consecutive transmembrane segments (helical) span residues 28–48, 52–72, 102–122, 146–166, 169–189, 219–239, 241–261, and 275–295; these read PIGI…AGKG, LKTV…GCVI, ALAL…FTNA, YYPQ…AFTA, GDLP…TVGY, VIIL…GARF, LGAC…WEFW, and FLHN…DYAV.

The protein belongs to the UbiA prenyltransferase family. It depends on Mg(2+) as a cofactor.

Its subcellular location is the cell inner membrane. It carries out the reaction all-trans-octaprenyl diphosphate + 4-hydroxybenzoate = 4-hydroxy-3-(all-trans-octaprenyl)benzoate + diphosphate. Its pathway is cofactor biosynthesis; ubiquinone biosynthesis. Catalyzes the prenylation of para-hydroxybenzoate (PHB) with an all-trans polyprenyl group. Mediates the second step in the final reaction sequence of ubiquinone-8 (UQ-8) biosynthesis, which is the condensation of the polyisoprenoid side chain with PHB, generating the first membrane-bound Q intermediate 3-octaprenyl-4-hydroxybenzoate. The chain is 4-hydroxybenzoate octaprenyltransferase from Pseudomonas savastanoi pv. phaseolicola (strain 1448A / Race 6) (Pseudomonas syringae pv. phaseolicola (strain 1448A / Race 6)).